We begin with the raw amino-acid sequence, 445 residues long: Glucose-6-phosphate isomerase (445 aa).

E284 acts as the Proton donor in catalysis. Residues H305 and K419 contribute to the active site.

It belongs to the GPI family.

Its subcellular location is the cytoplasm. The enzyme catalyses alpha-D-glucose 6-phosphate = beta-D-fructose 6-phosphate. It participates in carbohydrate biosynthesis; gluconeogenesis. The protein operates within carbohydrate degradation; glycolysis; D-glyceraldehyde 3-phosphate and glycerone phosphate from D-glucose: step 2/4. In terms of biological role, catalyzes the reversible isomerization of glucose-6-phosphate to fructose-6-phosphate. The chain is Glucose-6-phosphate isomerase from Leptospira borgpetersenii serovar Hardjo-bovis (strain JB197).